A 281-amino-acid chain; its full sequence is Type VI secretion system accessory component TagJ (281 aa).

Interacts with TssB1 (via N-terminus). Interacts with ClpV1.

Component of the H1 type VI (H1-T6SS) secretion system that plays a role in the release of toxins targeting both eukaryotic and prokaryotic species. Forms a stable complex with TssB1. This complex, although not crucial for the H1-T6SS function, may fine-tune the assembly of the system. Plays a role in the interaction between ClpV1 and the TssC1/TssB1 sheath. The polypeptide is Type VI secretion system accessory component TagJ (Pseudomonas aeruginosa (strain ATCC 15692 / DSM 22644 / CIP 104116 / JCM 14847 / LMG 12228 / 1C / PRS 101 / PAO1)).